The following is a 178-amino-acid chain: ATP-dependent protease subunit HslV (178 aa).

Residue Thr5 is part of the active site. Na(+) is bound by residues Gly161, Cys164, and Thr167.

It belongs to the peptidase T1B family. HslV subfamily. In terms of assembly, a double ring-shaped homohexamer of HslV is capped on each side by a ring-shaped HslU homohexamer. The assembly of the HslU/HslV complex is dependent on binding of ATP.

The protein resides in the cytoplasm. It carries out the reaction ATP-dependent cleavage of peptide bonds with broad specificity.. Its activity is regulated as follows. Allosterically activated by HslU binding. Protease subunit of a proteasome-like degradation complex believed to be a general protein degrading machinery. The polypeptide is ATP-dependent protease subunit HslV (Nitratiruptor sp. (strain SB155-2)).